Consider the following 345-residue polypeptide: MTDKTSLSYKDAGVDIDAGNALVGRIKGVVKKTRRPEVMGGLGGFGALCALPQKYREPVLVSGTDGVGTKLRLAMDLKRHDTIGIDLVAMCVNDLVVQGAEPLFFLDYYATGKLDVDTASAVISGIAEGCLQSGCSLVGGETAEMPGMYHGEDYDVAGFCVGVVEKSEIIDGSKVSDGDVLIALGSSGPHSNGYSLVRKILEVSGCDPQTTELDGKPLADHLLAPTRIYVKSVLELIEKVDVHAIAHLTGGGFWENIPRVLPDNTQAVIDESSWQWPEVFNWLQTAGNVERHEMYRTFNCGVGMIIALPAPEVDKALALLNSNGENAWKIGIIKASDSEQRVVIE.

The protein belongs to the AIR synthase family.

It localises to the cytoplasm. It carries out the reaction 2-formamido-N(1)-(5-O-phospho-beta-D-ribosyl)acetamidine + ATP = 5-amino-1-(5-phospho-beta-D-ribosyl)imidazole + ADP + phosphate + H(+). Its pathway is purine metabolism; IMP biosynthesis via de novo pathway; 5-amino-1-(5-phospho-D-ribosyl)imidazole from N(2)-formyl-N(1)-(5-phospho-D-ribosyl)glycinamide: step 2/2. The sequence is that of Phosphoribosylformylglycinamidine cyclo-ligase from Escherichia coli O139:H28 (strain E24377A / ETEC).